The primary structure comprises 196 residues: Peptide deformylase (196 aa).

Fe cation-binding residues include cysteine 123 and histidine 166. Glutamate 167 is an active-site residue. Histidine 170 provides a ligand contact to Fe cation.

It belongs to the polypeptide deformylase family. The cofactor is Fe(2+).

It catalyses the reaction N-terminal N-formyl-L-methionyl-[peptide] + H2O = N-terminal L-methionyl-[peptide] + formate. Its function is as follows. Removes the formyl group from the N-terminal Met of newly synthesized proteins. Requires at least a dipeptide for an efficient rate of reaction. N-terminal L-methionine is a prerequisite for activity but the enzyme has broad specificity at other positions. This Lactococcus lactis subsp. lactis (strain IL1403) (Streptococcus lactis) protein is Peptide deformylase.